A 188-amino-acid polypeptide reads, in one-letter code: ATP synthase subunit delta (188 aa).

The protein belongs to the ATPase delta chain family. F-type ATPases have 2 components, F(1) - the catalytic core - and F(0) - the membrane proton channel. F(1) has five subunits: alpha(3), beta(3), gamma(1), delta(1), epsilon(1). F(0) has three main subunits: a(1), b(2) and c(10-14). The alpha and beta chains form an alternating ring which encloses part of the gamma chain. F(1) is attached to F(0) by a central stalk formed by the gamma and epsilon chains, while a peripheral stalk is formed by the delta and b chains.

The protein resides in the cell membrane. F(1)F(0) ATP synthase produces ATP from ADP in the presence of a proton or sodium gradient. F-type ATPases consist of two structural domains, F(1) containing the extramembraneous catalytic core and F(0) containing the membrane proton channel, linked together by a central stalk and a peripheral stalk. During catalysis, ATP synthesis in the catalytic domain of F(1) is coupled via a rotary mechanism of the central stalk subunits to proton translocation. Functionally, this protein is part of the stalk that links CF(0) to CF(1). It either transmits conformational changes from CF(0) to CF(1) or is implicated in proton conduction. The polypeptide is ATP synthase subunit delta (Lawsonia intracellularis (strain PHE/MN1-00)).